We begin with the raw amino-acid sequence, 109 residues long: Co-chaperonin GroES (109 aa).

It belongs to the GroES chaperonin family. Heptamer of 7 subunits arranged in a ring. Interacts with the chaperonin GroEL.

The protein resides in the cytoplasm. In terms of biological role, together with the chaperonin GroEL, plays an essential role in assisting protein folding. The GroEL-GroES system forms a nano-cage that allows encapsulation of the non-native substrate proteins and provides a physical environment optimized to promote and accelerate protein folding. GroES binds to the apical surface of the GroEL ring, thereby capping the opening of the GroEL channel. The sequence is that of Co-chaperonin GroES from Methanosarcina acetivorans (strain ATCC 35395 / DSM 2834 / JCM 12185 / C2A).